The following is a 281-amino-acid chain: Large ribosomal subunit protein uL2 (281 aa).

The tract at residues 223–255 (TVRGSVMNPNDHPHGGGEGRAPIGRKSPVTPWG) is disordered.

The protein belongs to the universal ribosomal protein uL2 family. In terms of assembly, part of the 50S ribosomal subunit. Forms a bridge to the 30S subunit in the 70S ribosome.

Its function is as follows. One of the primary rRNA binding proteins. Required for association of the 30S and 50S subunits to form the 70S ribosome, for tRNA binding and peptide bond formation. It has been suggested to have peptidyltransferase activity; this is somewhat controversial. Makes several contacts with the 16S rRNA in the 70S ribosome. This is Large ribosomal subunit protein uL2 from Mycoplasma capricolum subsp. capricolum (strain California kid / ATCC 27343 / NCTC 10154).